The sequence spans 319 residues: Pectinesterase (319 aa).

Q1 bears the Pyrrolidone carboxylic acid mark. 2 residues coordinate substrate: T83 and Q113. The Proton donor role is filled by D136. A disulfide bridge connects residues C150 and C170. Catalysis depends on D157, which acts as the Nucleophile. Residues R225 and W227 each contribute to the substrate site.

Belongs to the pectinesterase family.

It localises to the secreted. The protein localises to the cell wall. It catalyses the reaction [(1-&gt;4)-alpha-D-galacturonosyl methyl ester](n) + n H2O = [(1-&gt;4)-alpha-D-galacturonosyl](n) + n methanol + n H(+). Its pathway is glycan metabolism; pectin degradation; 2-dehydro-3-deoxy-D-gluconate from pectin: step 1/5. In terms of biological role, catalyzes the deesterification of methyl-esterified D-galactosiduronic acid units in pectic compounds. It participates in modulating cell wall during fruit ripening, cell wall extension during pollen germination, and in defense mechanisms against pathogens. The polypeptide is Pectinesterase (Daucus carota (Wild carrot)).